A 348-amino-acid polypeptide reads, in one-letter code: Phosphate acyltransferase (348 aa).

The protein belongs to the PlsX family. In terms of assembly, homodimer. Probably interacts with PlsY.

It is found in the cytoplasm. The catalysed reaction is a fatty acyl-[ACP] + phosphate = an acyl phosphate + holo-[ACP]. The protein operates within lipid metabolism; phospholipid metabolism. Catalyzes the reversible formation of acyl-phosphate (acyl-PO(4)) from acyl-[acyl-carrier-protein] (acyl-ACP). This enzyme utilizes acyl-ACP as fatty acyl donor, but not acyl-CoA. The polypeptide is Phosphate acyltransferase (Neisseria gonorrhoeae (strain ATCC 700825 / FA 1090)).